A 570-amino-acid chain; its full sequence is Phosphoglucomutase 1 (570 aa).

Serine 2 carries the post-translational modification N-acetylserine. Arginine 24 and serine 120 together coordinate alpha-D-glucose 1,6-bisphosphate. Serine 120 serves as the catalytic Phosphoserine intermediate. Mg(2+)-binding residues include serine 120, aspartate 291, aspartate 293, and aspartate 295. Position 120 is a phosphoserine (serine 120). Alpha-D-glucose 1,6-bisphosphate-binding residues include aspartate 295, arginine 296, threonine 360, glutamate 379, serine 381, and lysine 392.

It belongs to the phosphohexose mutase family. In terms of assembly, monomer. The cofactor is Mg(2+).

Its subcellular location is the cytoplasm. It catalyses the reaction alpha-D-glucose 1-phosphate = alpha-D-glucose 6-phosphate. The catalysed reaction is O-phospho-L-seryl-[protein] + alpha-D-glucose 1-phosphate = alpha-D-glucose 1,6-bisphosphate + L-seryl-[protein]. It carries out the reaction alpha-D-glucose 1,6-bisphosphate + L-seryl-[protein] = O-phospho-L-seryl-[protein] + alpha-D-glucose 6-phosphate. Functionally, minor phosphoglucomutase isozyme that catalyzes the reversible interconversion of alpha-D-glucose 1-phosphate and alpha-D-glucose 6-phosphate. The mechanism proceeds via the intermediate compound alpha-D-glucose 1,6-bisphosphate. Constitutes about 10-20% of the phosphoglucomutase activity in the cell. Key enzyme in hexose metabolism. The forward reaction is an essential step in the energy metabolism of galactose since the product of the galactose pathway enzymes in yeast is glucose 1-phosphate. The reverse reaction is an essential step for biosynthesis when carbon sources other than galactose are the energy source because glucose 1-phosphate is the starting point for the synthesis of UDP-glucose, which acts as a precursor for the synthesis of oligosaccharides and trehalose. The chain is Phosphoglucomutase 1 from Saccharomyces cerevisiae (strain ATCC 204508 / S288c) (Baker's yeast).